The primary structure comprises 484 residues: MTATTITPETKDEVVGVGRVVRVIGPVVDVEFPAGQLPEILNALHVDAEVMGETHAITLEVALHIGENVVRAISLKPTDGMRRGTEVRDTGAPISVPVGDVTKGHVWNVTGDVLNADPSTIEVTERWPIHRDPPAFDDLEPETEMLETGIKVLDLLTPYVKGGKIGLFGGAGVGKTVLIQEMIYRIAHNFGGTSVFAGVGERTREGNDLINEMDEAGVLKDTALVFGQMDEPPGTRLRIALTGLTMAEYFRDVQNQDVLLFIDNIFRFSQAGSEVSTLLGRMPSAVGYQPNLADEMGQLQERITSTRGHSITSMQAVYVPADDYTDPAPATTFAHLDATTELSREIASRGLYPAVDPLTSTSRILDPLYVGQEHYDTATQVKQILQRNKELQDIIAILGVDELSEEDKVTVARARRIQQFLSQNTYTAEKFTGVAGSTVPIADTVEGFQMICRGDVDHIPEQAFFNVGSMDMVMENWDKMKKEG.

ATP is bound at residue 169–176; the sequence is GGAGVGKT.

Belongs to the ATPase alpha/beta chains family. F-type ATPases have 2 components, CF(1) - the catalytic core - and CF(0) - the membrane proton channel. CF(1) has five subunits: alpha(3), beta(3), gamma(1), delta(1), epsilon(1). CF(0) has three main subunits: a(1), b(2) and c(9-12). The alpha and beta chains form an alternating ring which encloses part of the gamma chain. CF(1) is attached to CF(0) by a central stalk formed by the gamma and epsilon chains, while a peripheral stalk is formed by the delta and b chains.

It is found in the cell membrane. It catalyses the reaction ATP + H2O + 4 H(+)(in) = ADP + phosphate + 5 H(+)(out). Its function is as follows. Produces ATP from ADP in the presence of a proton gradient across the membrane. The catalytic sites are hosted primarily by the beta subunits. This chain is ATP synthase subunit beta, found in Cutibacterium acnes (strain DSM 16379 / KPA171202) (Propionibacterium acnes).